Here is a 212-residue protein sequence, read N- to C-terminus: Protein-L-isoaspartate O-methyltransferase (212 aa).

Serine 60 is an active-site residue.

The protein belongs to the methyltransferase superfamily. L-isoaspartyl/D-aspartyl protein methyltransferase family.

The protein localises to the cytoplasm. It catalyses the reaction [protein]-L-isoaspartate + S-adenosyl-L-methionine = [protein]-L-isoaspartate alpha-methyl ester + S-adenosyl-L-homocysteine. Its function is as follows. Catalyzes the methyl esterification of L-isoaspartyl residues in peptides and proteins that result from spontaneous decomposition of normal L-aspartyl and L-asparaginyl residues. It plays a role in the repair and/or degradation of damaged proteins. The sequence is that of Protein-L-isoaspartate O-methyltransferase from Methanococcus maripaludis (strain C7 / ATCC BAA-1331).